A 310-amino-acid chain; its full sequence is Protoheme IX farnesyltransferase (310 aa).

Helical transmembrane passes span Val-31–Val-51, Pro-53–Leu-73, Asn-102–Ser-122, Leu-124–Leu-144, Thr-149–Ser-169, Ala-170–Thr-190, Leu-242–Met-262, and Leu-289–Gly-309.

Belongs to the UbiA prenyltransferase family. Protoheme IX farnesyltransferase subfamily.

The protein localises to the cell membrane. The enzyme catalyses heme b + (2E,6E)-farnesyl diphosphate + H2O = Fe(II)-heme o + diphosphate. It functions in the pathway porphyrin-containing compound metabolism; heme O biosynthesis; heme O from protoheme: step 1/1. Its function is as follows. Converts heme B (protoheme IX) to heme O by substitution of the vinyl group on carbon 2 of heme B porphyrin ring with a hydroxyethyl farnesyl side group. In Mycobacterium sp. (strain JLS), this protein is Protoheme IX farnesyltransferase.